Reading from the N-terminus, the 389-residue chain is Succinate--CoA ligase [ADP-forming] subunit beta (389 aa).

In terms of domain architecture, ATP-grasp spans Lys-9–Glu-244. ATP contacts are provided by residues Lys-46, Gly-53–Gly-55, Glu-99, Ala-102, and Glu-107. Asn-199 and Asp-213 together coordinate Mg(2+). Residues Asn-264 and Gly-321 to Met-323 each bind substrate.

This sequence belongs to the succinate/malate CoA ligase beta subunit family. In terms of assembly, heterotetramer of two alpha and two beta subunits. Requires Mg(2+) as cofactor.

The catalysed reaction is succinate + ATP + CoA = succinyl-CoA + ADP + phosphate. It catalyses the reaction GTP + succinate + CoA = succinyl-CoA + GDP + phosphate. It functions in the pathway carbohydrate metabolism; tricarboxylic acid cycle; succinate from succinyl-CoA (ligase route): step 1/1. In terms of biological role, succinyl-CoA synthetase functions in the citric acid cycle (TCA), coupling the hydrolysis of succinyl-CoA to the synthesis of either ATP or GTP and thus represents the only step of substrate-level phosphorylation in the TCA. The beta subunit provides nucleotide specificity of the enzyme and binds the substrate succinate, while the binding sites for coenzyme A and phosphate are found in the alpha subunit. The sequence is that of Succinate--CoA ligase [ADP-forming] subunit beta from Polynucleobacter necessarius subsp. necessarius (strain STIR1).